We begin with the raw amino-acid sequence, 224 residues long: UPF0758 protein PSPTO_0086 (224 aa).

Positions 102 to 224 (ALENPAQVRN…PLSMVEKGLM (123 aa)) constitute an MPN domain. Zn(2+) is bound by residues His-173, His-175, and Asp-186. Positions 173–186 (HNHPSGITTPSRSD) match the JAMM motif motif.

This sequence belongs to the UPF0758 family.

In Pseudomonas syringae pv. tomato (strain ATCC BAA-871 / DC3000), this protein is UPF0758 protein PSPTO_0086.